The primary structure comprises 545 residues: Chaperonin GroEL (545 aa).

ATP-binding positions include 29–32, lysine 50, 86–90, glycine 415, and aspartate 495; these read TLGP and DGTTT.

It belongs to the chaperonin (HSP60) family. As to quaternary structure, forms a cylinder of 14 subunits composed of two heptameric rings stacked back-to-back. Interacts with the co-chaperonin GroES.

It is found in the cytoplasm. It catalyses the reaction ATP + H2O + a folded polypeptide = ADP + phosphate + an unfolded polypeptide.. In terms of biological role, together with its co-chaperonin GroES, plays an essential role in assisting protein folding. The GroEL-GroES system forms a nano-cage that allows encapsulation of the non-native substrate proteins and provides a physical environment optimized to promote and accelerate protein folding. This chain is Chaperonin GroEL, found in Bacteroides thetaiotaomicron (strain ATCC 29148 / DSM 2079 / JCM 5827 / CCUG 10774 / NCTC 10582 / VPI-5482 / E50).